We begin with the raw amino-acid sequence, 3948 residues long: Hybrid PKS-NRPS synthetase fsa1 (3948 aa).

Positions 4 to 438 (SEPIAVIGSA…GTNAHAIIEA (435 aa)) constitute a Ketosynthase family 3 (KS3) domain. Residues Cys-177, His-316, and His-358 each act as for beta-ketoacyl synthase activity in the active site. Residues 543-846 (IFTGQGTQWP…LDTIEAISEG (304 aa)) are malonyl-CoA:ACP transacylase (MAT) domain. The segment at 931–1066 (HPLLGRRCHD…AQIKASLGTP (136 aa)) is N-terminal hotdog fold. Residues 931-1233 (HPLLGRRCHD…MELVPFSPAT (303 aa)) form a dehydratase (DH) domain region. Positions 931–1235 (HPLLGRRCHD…LVPFSPATPA (305 aa)) constitute a PKS/mFAS DH domain. The active-site Proton acceptor; for dehydratase activity is His-964. Residues 1081–1235 (LRPVSVDRFY…LVPFSPATPA (155 aa)) form a C-terminal hotdog fold region. Residue Asp-1141 is the Proton donor; for dehydratase activity of the active site. Positions 1381-1578 (YEQGFGLNLV…TTPPVHKILP (198 aa)) are methyltransferase (MT) domain. Positions 2105–2277 (TFLLIGLTGE…VAASSIDISS (173 aa)) are ketoreductase (KR) domain. The 76-residue stretch at 2389–2464 (AIIKESFIVR…DLVDESLDLL (76 aa)) folds into the Carrier 1 domain. Ser-2424 is modified (O-(pantetheine 4'-phosphoryl)serine). Residues 2475–2555 (EAGNAHPAKP…TDNLTPPRTF (81 aa)) are disordered. Polar residues-rich tracts occupy residues 2487–2505 (VIPQ…QGTS) and 2513–2528 (GSDS…LTSW). The span at 2529–2541 (DRQDLSPPDKSDD) shows a compositional bias: basic and acidic residues. Over residues 2542–2551 (APNSTDNLTP) the composition is skewed to polar residues. The condensation (C) domain stretch occupies residues 2547–2976 (DNLTPPRTFP…TQVLLRSYLS (430 aa)). Residues 3000–3402 (LKVAVDAGKA…PDTFFGTSGT (403 aa)) form an adenylation (A) (KR) domain region. Residues 3540 to 3617 (KSLTASEKRL…AMASVLEDCG (78 aa)) enclose the Carrier 2 domain. Residue Ser-3577 is modified to O-(pantetheine 4'-phosphoryl)serine. The interval 3653-3870 (LTGSSGYLGR…MPVNEIVEAI (218 aa)) is reductase (RED) domain.

It in the C-terminal section; belongs to the NRP synthetase family.

The enzyme catalyses L-serine + 7 malonyl-CoA + acetyl-CoA + 2 S-adenosyl-L-methionine + ATP + 8 NADPH + 11 H(+) = (5S)-3-[(2E,6R,8E,10E,12E)-2,6-dimethyltetradeca-2,8,10,12-tetraenoyl]-5-(hydroxymethyl)pyrrolidine-2,4-dione + AMP + 2 S-adenosyl-L-homocysteine + 7 CO2 + diphosphate + 8 NADP(+) + 8 CoA + 6 H2O. It functions in the pathway mycotoxin biosynthesis. Functionally, hybrid PKS-NRPS synthetase; part of the gene cluster that mediates the biosynthesis of HIV-1 integrase inhibitor equisetin and of fusarisetin A, both trans-fused decalin-containing tetramic acids showing also antimicrobial activity. The PKS module of fsa1 together with the enoylreductase fsa3 catalyze the formation of the polyketide unit which is then conjugated to L-serine by the condensation domain of the fsa1 NRPS module. Activity of the Dieckmann cyclase domain (RED) results in release of the Dieckmann product intermediate. Diels-Alderase fsa2 is involved in endo-selective Diels-Alder cycloaddition to form the decalin ring, leading to the production of N-desmethylequisetin also called trichosetin. Subsequent N-methylation is carried out by fsa4 to give equisetin. The enzymatic gene responsible for the conversion of equisetin to fusarisetin A has not been identified yet and is probably located outside of the fsa cluster. This chain is Hybrid PKS-NRPS synthetase fsa1, found in Fusarium sp. (strain FN080326).